A 1093-amino-acid chain; its full sequence is NACHT, LRR and PYD domains-containing protein 14 (1093 aa).

In terms of domain architecture, Pyrin spans 1 to 97; the sequence is MADSSSSSFF…CERAKEEINW (97 aa). The interval 102-121 is disordered; it reads IGPDDAKAGETQEDQEAVLG. Residues 177 to 499 form the NACHT domain; the sequence is QIVVLQGAAG…MFYMLKGSWE (323 aa). Residue 183–190 coordinates ATP; it reads GAAGVGKT. 11 LRR repeats span residues 730-750, 759-780, 787-807, 816-836, 844-864, 873-894, 901-921, 930-951, 958-978, 987-1008, and 1015-1035; these read NLMH…KSLC, KLQT…NISN, SLIF…QLLC, YLER…EYLS, RLTH…KLMS, TLKS…YLST, SLTH…KLLC, NLQD…DLAS, NLRS…KILC, NIQR…DLSS, and RLIK…VKLY.

The protein belongs to the NLRP family. In terms of tissue distribution, testis-specific.

It localises to the cytoplasm. Its function is as follows. May be involved in inflammation and spermatogenesis. This is NACHT, LRR and PYD domains-containing protein 14 (NLRP14) from Homo sapiens (Human).